The chain runs to 124 residues: Fluoride-specific ion channel FluC (124 aa).

Transmembrane regions (helical) follow at residues Val-4 to Phe-24, Phe-35 to Gly-55, Ile-60 to Ser-80, and Trp-95 to Leu-115. Residues Gly-74 and Thr-77 each contribute to the Na(+) site.

The protein belongs to the fluoride channel Fluc/FEX (TC 1.A.43) family.

The protein resides in the cell inner membrane. The enzyme catalyses fluoride(in) = fluoride(out). With respect to regulation, na(+) is not transported, but it plays an essential structural role and its presence is essential for fluoride channel function. In terms of biological role, fluoride-specific ion channel. Important for reducing fluoride concentration in the cell, thus reducing its toxicity. This is Fluoride-specific ion channel FluC from Shewanella putrefaciens (strain CN-32 / ATCC BAA-453).